A 231-amino-acid chain; its full sequence is Ribonuclease HII (231 aa).

In terms of domain architecture, RNase H type-2 spans 33-222; it reads WPVAGADEAG…FREAQEQPLA (190 aa). A divalent metal cation-binding residues include Asp-39, Glu-40, and Asp-130.

It belongs to the RNase HII family. It depends on Mn(2+) as a cofactor. The cofactor is Mg(2+).

Its subcellular location is the cytoplasm. The catalysed reaction is Endonucleolytic cleavage to 5'-phosphomonoester.. Its function is as follows. Endonuclease that specifically degrades the RNA of RNA-DNA hybrids. The sequence is that of Ribonuclease HII from Sinorhizobium fredii (strain NBRC 101917 / NGR234).